Consider the following 229-residue polypeptide: Guanylate kinase (229 aa).

The RPE1 insert domain maps to 7 to 42 (RVLQKCAYREEFKGDMERSTAATSKLPLEVELSRNS). One can recognise a Guanylate kinase-like domain in the interval 44 to 222 (GLIIILSSPS…TLKKIHAIIV (179 aa)). 51 to 58 (SPSGTGKS) contributes to the ATP binding site.

This sequence belongs to the guanylate kinase family.

The protein resides in the cytoplasm. The catalysed reaction is GMP + ATP = GDP + ADP. Its function is as follows. Essential for recycling GMP and indirectly, cGMP. The protein is Guanylate kinase (gmk) of Rickettsia conorii (strain ATCC VR-613 / Malish 7).